The primary structure comprises 173 residues: Ribosome maturation factor RimP (173 aa).

This sequence belongs to the RimP family.

The protein localises to the cytoplasm. In terms of biological role, required for maturation of 30S ribosomal subunits. This is Ribosome maturation factor RimP from Chlorobaculum tepidum (strain ATCC 49652 / DSM 12025 / NBRC 103806 / TLS) (Chlorobium tepidum).